Here is a 420-residue protein sequence, read N- to C-terminus: Serine--tRNA ligase (420 aa).

225–227 (TLE) contributes to the L-serine binding site. 256-258 (RQE) contacts ATP. Glutamate 279 is a binding site for L-serine. 343–346 (EVSS) is an ATP binding site. Threonine 379 is an L-serine binding site.

The protein belongs to the class-II aminoacyl-tRNA synthetase family. Type-1 seryl-tRNA synthetase subfamily. In terms of assembly, homodimer. The tRNA molecule binds across the dimer.

It is found in the cytoplasm. The enzyme catalyses tRNA(Ser) + L-serine + ATP = L-seryl-tRNA(Ser) + AMP + diphosphate + H(+). It carries out the reaction tRNA(Sec) + L-serine + ATP = L-seryl-tRNA(Sec) + AMP + diphosphate + H(+). It participates in aminoacyl-tRNA biosynthesis; selenocysteinyl-tRNA(Sec) biosynthesis; L-seryl-tRNA(Sec) from L-serine and tRNA(Sec): step 1/1. Its function is as follows. Catalyzes the attachment of serine to tRNA(Ser). Is also able to aminoacylate tRNA(Sec) with serine, to form the misacylated tRNA L-seryl-tRNA(Sec), which will be further converted into selenocysteinyl-tRNA(Sec). This chain is Serine--tRNA ligase, found in Mycoplasma pneumoniae (strain ATCC 29342 / M129 / Subtype 1) (Mycoplasmoides pneumoniae).